We begin with the raw amino-acid sequence, 137 residues long: Large ribosomal subunit protein uL16 (137 aa).

The protein belongs to the universal ribosomal protein uL16 family. As to quaternary structure, part of the 50S ribosomal subunit.

Functionally, binds 23S rRNA and is also seen to make contacts with the A and possibly P site tRNAs. This is Large ribosomal subunit protein uL16 from Cereibacter sphaeroides (strain ATCC 17029 / ATH 2.4.9) (Rhodobacter sphaeroides).